We begin with the raw amino-acid sequence, 350 residues long: Small-conductance mechanosensitive channel MscMJ (350 aa).

5 helical membrane-spanning segments follow: residues 10–30 (ISNILIFVVITLLGIFIGKIV), 59–79 (LPIIVLVVTLFFYFGLRFLIL), 91–111 (VKVVVILSATYFAVKFIDGIF), 130–150 (IIKPLKKVVKILTILLGILTA), and 154–174 (VGYDITALLAGLGVGGLALAL).

It belongs to the MscS (TC 1.A.23) family.

It is found in the cell membrane. Functionally, small-conductance mechanosensitive channel that opens in response to stretch forces in the membrane lipid bilayer. Exhibits a sixfold preference for cations over anions. Non-rectifying. This Methanocaldococcus jannaschii (strain ATCC 43067 / DSM 2661 / JAL-1 / JCM 10045 / NBRC 100440) (Methanococcus jannaschii) protein is Small-conductance mechanosensitive channel MscMJ.